The primary structure comprises 2523 residues: uncharacterized protein (2523 aa).

This sequence belongs to the mycobacterial PPE family.

Its function is as follows. Probably plays a role in host phagosome maturation arrest. This is an uncharacterized protein from Mycobacterium tuberculosis (strain ATCC 25618 / H37Rv).